A 128-amino-acid chain; its full sequence is Large ribosomal subunit protein mL51 (128 aa).

The N-terminal 31 residues, 1–31, are a transit peptide targeting the mitochondrion; that stretch reads MAGSLSWVAGRRLWGLVPLACRSFFLGVPRL.

It belongs to the mitochondrion-specific ribosomal protein mL51 family. As to quaternary structure, component of the mitochondrial ribosome large subunit (39S) which comprises a 16S rRNA and about 50 distinct proteins. Interacts with OXA1L.

It localises to the mitochondrion. This chain is Large ribosomal subunit protein mL51 (MRPL51), found in Bos taurus (Bovine).